An 88-amino-acid polypeptide reads, in one-letter code: UPF0250 protein bbp_432 (88 aa).

This sequence belongs to the UPF0250 family.

This chain is UPF0250 protein bbp_432, found in Buchnera aphidicola subsp. Baizongia pistaciae (strain Bp).